The sequence spans 240 residues: Ribosomal RNA large subunit methyltransferase E (240 aa).

Gly residues predominate over residues 1–20; the sequence is MSKAGGNKGGVKTGGRGGAG. Positions 1–27 are disordered; that stretch reads MSKAGGNKGGVKTGGRGGAGSSNLQVR. Residues glycine 92, tryptophan 94, aspartate 115, aspartate 131, and aspartate 155 each contribute to the S-adenosyl-L-methionine site. The active-site Proton acceptor is lysine 195.

The protein belongs to the class I-like SAM-binding methyltransferase superfamily. RNA methyltransferase RlmE family.

It is found in the cytoplasm. It catalyses the reaction uridine(2552) in 23S rRNA + S-adenosyl-L-methionine = 2'-O-methyluridine(2552) in 23S rRNA + S-adenosyl-L-homocysteine + H(+). In terms of biological role, specifically methylates the uridine in position 2552 of 23S rRNA at the 2'-O position of the ribose in the fully assembled 50S ribosomal subunit. This Brucella anthropi (strain ATCC 49188 / DSM 6882 / CCUG 24695 / JCM 21032 / LMG 3331 / NBRC 15819 / NCTC 12168 / Alc 37) (Ochrobactrum anthropi) protein is Ribosomal RNA large subunit methyltransferase E.